A 502-amino-acid polypeptide reads, in one-letter code: ATP synthase subunit alpha (502 aa).

169-176 (GDRQTGKT) is an ATP binding site.

This sequence belongs to the ATPase alpha/beta chains family. F-type ATPases have 2 components, CF(1) - the catalytic core - and CF(0) - the membrane proton channel. CF(1) has five subunits: alpha(3), beta(3), gamma(1), delta(1), epsilon(1). CF(0) has three main subunits: a(1), b(2) and c(9-12). The alpha and beta chains form an alternating ring which encloses part of the gamma chain. CF(1) is attached to CF(0) by a central stalk formed by the gamma and epsilon chains, while a peripheral stalk is formed by the delta and b chains.

It localises to the cell membrane. The enzyme catalyses ATP + H2O + 4 H(+)(in) = ADP + phosphate + 5 H(+)(out). Functionally, produces ATP from ADP in the presence of a proton gradient across the membrane. The alpha chain is a regulatory subunit. This is ATP synthase subunit alpha from Desulfitobacterium hafniense (strain Y51).